Consider the following 851-residue polypeptide: Protein FAM13B (851 aa).

The region spanning 23–212 (IPLDELQQGG…GLLENYYEFF (190 aa)) is the Rho-GAP domain. Residues 556–565 (IKDAKHKNSD) are compositionally biased toward basic and acidic residues. The interval 556–611 (IKDAKHKNSDGEFAPQTRPRSNTLPKSFGSSLDHEDGESEGEPRVIQKEKTPSKEA) is disordered. Residues 573-585 (RPRSNTLPKSFGS) show a composition bias toward polar residues. Residues 596–611 (GEPRVIQKEKTPSKEA) show a composition bias toward basic and acidic residues.

The protein belongs to the FAM13 family.

The polypeptide is Protein FAM13B (Fam13b) (Mus musculus (Mouse)).